The sequence spans 207 residues: Thymidylate kinase (207 aa).

G7–T14 is a binding site for ATP.

It belongs to the thymidylate kinase family.

It carries out the reaction dTMP + ATP = dTDP + ADP. Functionally, phosphorylation of dTMP to form dTDP in both de novo and salvage pathways of dTTP synthesis. In Aster yellows witches'-broom phytoplasma (strain AYWB), this protein is Thymidylate kinase.